A 129-amino-acid chain; its full sequence is Type II secretion system protein I (129 aa).

The propeptide at 1-6 (MKRARG) is leader sequence. The residue at position 7 (Phe7) is an N-methylphenylalanine. The helical transmembrane segment at 7–27 (FTLLEVLVALAIFAMVAASVL) threads the bilayer.

The protein belongs to the GSP I family. Type II secretion is composed of four main components: the outer membrane complex, the inner membrane complex, the cytoplasmic secretion ATPase and the periplasm-spanning pseudopilus. Forms the tip of the type II pseudopilus by interacting with XcpU, XcpW and XcpX. Interacts with core component XcpT. Cleaved by prepilin peptidase. Post-translationally, methylated by prepilin peptidase at the amino group of the N-terminal phenylalanine once the leader sequence is cleaved by prepilin peptidase.

The protein resides in the cell inner membrane. Component of the type II secretion system required for the energy-dependent secretion of extracellular factors such as proteases and toxins from the periplasm. Part of the pseudopilus tip complex that is critical for the recognition and binding of secretion substrates. Type II pseudopilus confers increased bacterial adhesive capabilities. The polypeptide is Type II secretion system protein I (xcpV) (Pseudomonas aeruginosa (strain ATCC 15692 / DSM 22644 / CIP 104116 / JCM 14847 / LMG 12228 / 1C / PRS 101 / PAO1)).